The primary structure comprises 458 residues: Brassinosteroid-related acyltransferase 1 (458 aa).

His-164 (proton acceptor) is an active-site residue.

It belongs to the plant acyltransferase family. As to expression, highly expressed in young tissues and vascular bundles. Mostly expressed in young leaves, primary roots, flowers (including petals and sepals), and siliques.

The protein resides in the endoplasmic reticulum. The protein localises to the nucleus. It participates in plant hormone biosynthesis; brassinosteroid biosynthesis. In terms of biological role, brassinosteroids (BR) acyltransferase with acyl-CoA ligase activity toward brassinolide (BL), castasterone (CS), typhasterol (TY), 6-deoxotyphasterol (6-deoxoTY), and 6-deoxocastasterone (6-deoxoCS) and thus converts them to corresponding lauroyl esters. Regulates BR homeostasis and promotes BR-mediated cell growth regulation. Involved in vascular bundle development. This is Brassinosteroid-related acyltransferase 1 from Arabidopsis thaliana (Mouse-ear cress).